The sequence spans 2101 residues: General transcription factor 3C polypeptide 1 (2101 aa).

Residues 473-487 show a composition bias toward acidic residues; it reads GEEAFLSDSESEEES. 2 disordered regions span residues 473-574 and 588-609; these read GEEA…MDSH and NPKE…DKPH. Basic residues predominate over residues 492 to 503; it reads GKRRGRGSRGHA. Low complexity predominate over residues 504 to 513; it reads RASGDAGSGS. Lys534 is covalently cross-linked (Glycyl lysine isopeptide (Lys-Gly) (interchain with G-Cter in SUMO2)). Ser667 is subject to Phosphoserine. Disordered regions lie at residues 718 to 772 and 820 to 864; these read STAN…EKMG and GEQP…SSWE. The span at 747-759 shows a compositional bias: polar residues; it reads RSANSDPNTSSKP. Composition is skewed to basic and acidic residues over residues 760–771 and 826–836; these read ESTRVKKTDEKM and HSERKTGKQES. Glycyl lysine isopeptide (Lys-Gly) (interchain with G-Cter in SUMO2) cross-links involve residues Lys770 and Lys833. A Phosphoserine modification is found at Ser1063. Basic and acidic residues predominate over residues 1186–1196; sequence EEQFELDREPT. Disordered stretches follow at residues 1186–1239, 1598–1627, and 1822–1923; these read EEQF…KKLR, KSLG…QGVE, and DTKA…QENQ. Residue Thr1196 is modified to Phosphothreonine. The segment covering 1199 to 1215 has biased composition (basic residues); it reads RNRKVRGGKSQKRKRLK. Residues 1229–1239 show a composition bias toward basic and acidic residues; it reads EHPEAKSKKLR. Over residues 1606-1617 the composition is skewed to acidic residues; it reads LDDDEEEEDLDE. Over residues 1822-1831 the composition is skewed to basic and acidic residues; the sequence is DTKASGDDSQ. Residues Ser1854 and Ser1890 each carry the phosphoserine modification. The span at 1900 to 1910 shows a compositional bias: low complexity; it reads EAQAPAQLAAP.

The protein belongs to the TFIIIC subunit 1 family. In terms of assembly, part of the TFIIIC subcomplex TFIIIC2, consisting of six subunits, GTF3C1, GTF3C2, GTF3C3, GTF3C4, GTF3C5 and GTF3C6. Interacts with IGHMBP2. Interacts with MAF1.

Its subcellular location is the nucleus. Required for RNA polymerase III-mediated transcription. Component of TFIIIC that initiates transcription complex assembly on tRNA and is required for transcription of 5S rRNA and other stable nuclear and cytoplasmic RNAs. Binds to the box B promoter element. This Mus musculus (Mouse) protein is General transcription factor 3C polypeptide 1 (Gtf3c1).